The chain runs to 368 residues: CST complex subunit STN1 (368 aa).

The tract at residues 1–185 is interaction with CTC1; it reads MQPGSSRCEE…KIYDQPFRSS (185 aa). The OB DNA-binding region spans 57 to 155; sequence VDVLGTVVGV…EIHATAYYKV (99 aa). 2 winged helix-turn-helix (wHTH) regions span residues 191-295 and 296-368; these read EALS…YVTR and EDKD…YTAF.

It belongs to the STN1 family. As to quaternary structure, component of the CST complex, composed of TEN1/C17orf106, CTC1/C17orf68 and STN1; in the complex interacts directly with TEN1 and CTC1. Interacts with ACD/TPP1, POT1 and POLA1.

Its subcellular location is the nucleus. The protein localises to the chromosome. It localises to the telomere. Component of the CST complex proposed to act as a specialized replication factor promoting DNA replication under conditions of replication stress or natural replication barriers such as the telomere duplex. The CST complex binds single-stranded DNA with high affinity in a sequence-independent manner, while isolated subunits bind DNA with low affinity by themselves. Initially the CST complex has been proposed to protect telomeres from DNA degradation. However, the CST complex has been shown to be involved in several aspects of telomere replication. The CST complex inhibits telomerase and is involved in telomere length homeostasis; it is proposed to bind to newly telomerase-synthesized 3' overhangs and to terminate telomerase action implicating the association with the ACD:POT1 complex thus interfering with its telomerase stimulation activity. The CST complex is also proposed to be involved in fill-in synthesis of the telomeric C-strand probably implicating recruitment and activation of DNA polymerase alpha. The CST complex facilitates recovery from many forms of exogenous DNA damage; seems to be involved in the re-initiation of DNA replication at repaired forks and/or dormant origins. Required for efficicient replication of the duplex region of the telomere. Promotes efficient replication of lagging-strand telomeres. Promotes general replication start following replication-fork stalling implicating new origin firing. May be in involved in C-strand fill-in during late S/G2 phase independent of its role in telomere duplex replication. The protein is CST complex subunit STN1 of Macaca fascicularis (Crab-eating macaque).